The primary structure comprises 190 residues: Vacuolar protein sorting-associated protein 29 (190 aa).

It belongs to the VPS29 family. As to quaternary structure, component of the retromer complex which consists of VPS29 (MAG1), VPS26 (VPS26A or VPS26B), VPS35 (VPS35A or VPS35B or VPS35C), VPS5/17 (SNX1 or SNX2A or SNX2B). Component of a retromer subcomplex consisting of VPS29 (MAG1), VPS26 (VPS26A or VPS26B), VPS35 (VPS35A or VPS35B or VPS35C).

Its subcellular location is the cytoplasm. The protein resides in the endosome membrane. It is found in the prevacuolar compartment membrane. It localises to the golgi apparatus. The protein localises to the trans-Golgi network membrane. Its subcellular location is the late endosome membrane. Plays a role in vesicular protein sorting. Component of the membrane-associated retromer complex which is essential in endosome-to-Golgi retrograde transport. Required for the auxin-carrier protein PIN2 sorting to the lytic vacuolar pathway and the PIN1 recycling to the plasma membrane, thus influencing auxin transport orientation. Also involved in the efficient sorting of seed storage proteins globulin 12S and albumin 2S. The VPS29-VPS26-VPS35 subcomplex may be involved in recycling of specific cargos from endosome to the plasma membrane. In Arabidopsis thaliana (Mouse-ear cress), this protein is Vacuolar protein sorting-associated protein 29.